A 532-amino-acid chain; its full sequence is Probable G-protein coupled receptor Mth-like 11 (532 aa).

The first 20 residues, 1–20, serve as a signal peptide directing secretion; the sequence is MGMFRVEYLLLGILVIGVRS. The Extracellular portion of the chain corresponds to 21–229; sequence RDIPNCDFFD…VRKSRLSNAS (209 aa). Intrachain disulfides connect cysteine 26/cysteine 80, cysteine 82/cysteine 87, cysteine 91/cysteine 184, cysteine 92/cysteine 103, and cysteine 145/cysteine 204. An N-linked (GlcNAc...) asparagine glycan is attached at asparagine 42. Asparagine 110, asparagine 123, asparagine 166, asparagine 195, and asparagine 227 each carry an N-linked (GlcNAc...) asparagine glycan. The helical transmembrane segment at 230 to 250 threads the bilayer; the sequence is IPVKFSSVFFMVITIAAYLWL. The Cytoplasmic segment spans residues 251 to 262; the sequence is PKFRSLHGKCCN. The chain crosses the membrane as a helical span at residues 263–283; it reads LYFICLAITFLLNVISLFGIF. The Extracellular segment spans residues 284–290; the sequence is ELKTPIC. A helical transmembrane segment spans residues 291 to 311; it reads YLTGYAGYFTVMATFLWLSVI. At 312 to 339 the chain is on the cytoplasmic side; sequence SFDVWRRFAMRKFQVFYKNKRSSFFNYN. Residues 340–360 form a helical membrane-spanning segment; the sequence is IIVWSSAGLLTCIIFLVDQFV. The Extracellular portion of the chain corresponds to 361-386; it reads ETNLDNPYNPAVGVFSCWIFTNGWSA. Residues 387-407 traverse the membrane as a helical segment; the sequence is TFYFYAPLAILIILNCASFFL. At 408–439 the chain is on the cytoplasmic side; that stretch reads TTRYIYVENKQNQKVLNNSEPQKLSRNHANYR. A helical membrane pass occupies residues 440 to 460; sequence IYFRLFIIMGGSWFLEIIAFI. The Extracellular portion of the chain corresponds to 461 to 469; the sequence is CEMENMWKP. Residues 470-490 form a helical membrane-spanning segment; it reads LIILNDYINCSQGIIIFVATF. The Cytoplasmic segment spans residues 491–532; that stretch reads CNHEMFRLIRKRIQNRNITSLELTNTSRPVESEKMADVELGK.

This sequence belongs to the G-protein coupled receptor 2 family. Mth subfamily.

The protein localises to the cell membrane. The protein is Probable G-protein coupled receptor Mth-like 11 (mthl11) of Drosophila melanogaster (Fruit fly).